Consider the following 486-residue polypeptide: Cardiolipin synthase A (486 aa).

2 consecutive transmembrane segments (helical) span residues 3–23 (TFYT…IAGV) and 38–58 (MAWL…YLSF). PLD phosphodiesterase domains lie at 219 to 246 (MDLR…VDPR) and 399 to 426 (EGGL…DMRS). Catalysis depends on residues His224, Lys226, Asp231, His404, Lys406, and Asp411.

It belongs to the phospholipase D family. Cardiolipin synthase subfamily. ClsA sub-subfamily.

It is found in the cell inner membrane. The catalysed reaction is 2 a 1,2-diacyl-sn-glycero-3-phospho-(1'-sn-glycerol) = a cardiolipin + glycerol. Functionally, catalyzes the reversible phosphatidyl group transfer from one phosphatidylglycerol molecule to another to form cardiolipin (CL) (diphosphatidylglycerol) and glycerol. The chain is Cardiolipin synthase A from Citrobacter koseri (strain ATCC BAA-895 / CDC 4225-83 / SGSC4696).